We begin with the raw amino-acid sequence, 335 residues long: NmrA-like family domain-containing oxidoreductase hkm9 (335 aa).

NADP(+) is bound by residues 12 to 17 (GATGNQ), 38 to 42 (RNPNS), 59 to 60 (DG), 80 to 82 (INS), lysine 137, and 161 to 164 (YLEN).

The protein belongs to the NmrA-type oxidoreductase family.

The protein operates within secondary metabolite biosynthesis. Its function is as follows. NmrA-like family domain-containing oxidoreductase; part of the gene cluster that mediates the biosynthesis of hancockiamides, an unusual new family of N-cinnamoylated piperazines. The NRPS hkm10 and the NmrA-like reductase hkm9 are proposed to convert two molecules of L-Phe to the intermediary piperazine called xenocockiamide A. Xenocockiamide A is then converted to hancockiamide D via a series of hydroxylations and O-methylations. The tyrosinase hkm6 may catalyze an aromatic hydroxylation, then the 2-oxoglutarate-dependent Fe(II) dioxygenase hkm4 and the FAD-dependent phenol hydroxylase hkm7 may catalyze consecutive hydroxylations to install 2 more hydroxy groups, and the methyltransferase hkm8 probably catalyzes two methylations using 2 molecules of S-adenosyl-L-methionine (SAM). The NRPS hkm11 activates and transfers trans-cinnamate supplied by the PAL hkm12 to hancockiamide D and produces hancockiamide A. NRPS Hkm11 has the flexibility to tolerate the bulky hancockiamide G as a substrate and the absence of the acetyl-transferase hkm3 opens up the opportunity for hkm11 to introduce a second N-cinnamoyl moiety. The cytochrome P450 monooxygenase hkm5 catalyzes the methylenedioxy bridge formation, converting hancockiamide A into hancockiamide G. Hkm5 can also convert hancockiamide B into hancockiamide C, and hancockiamide D into hancockiamide H. The N-acetyltransferase hkm3 finally transfers an acetyl group to 1-N of piperazine, converting hancockiamide A into hancockiamide B and hancockiamide G into hancockiamide C. The polypeptide is NmrA-like family domain-containing oxidoreductase hkm9 (Aspergillus hancockii).